Consider the following 370-residue polypeptide: Serine/threonine-protein kinase SAPK5 (370 aa).

Positions tyrosine 4 to phenylalanine 260 constitute a Protein kinase domain. ATP contacts are provided by residues isoleucine 10–alanine 18 and lysine 33. Aspartate 123 (proton acceptor) is an active-site residue. The segment at glutamate 312–serine 370 is disordered. Over residues threonine 330–tyrosine 349 the composition is skewed to acidic residues. A compositionally biased stretch (basic and acidic residues) spans aspartate 350 to valine 360.

It belongs to the protein kinase superfamily. Ser/Thr protein kinase family. In terms of processing, may be phosphorylated. In terms of tissue distribution, expressed in leaf blades, leaf sheaths and roots. Expressed in shoots and roots of young seedlings.

It localises to the cytoplasm. The protein resides in the nucleus. It carries out the reaction L-seryl-[protein] + ATP = O-phospho-L-seryl-[protein] + ADP + H(+). The enzyme catalyses L-threonyl-[protein] + ATP = O-phospho-L-threonyl-[protein] + ADP + H(+). Its activity is regulated as follows. Activated by hyperosmotic stress. May play a role in signal transduction of hyperosmotic response. In Oryza sativa subsp. japonica (Rice), this protein is Serine/threonine-protein kinase SAPK5 (SAPK5).